A 123-amino-acid polypeptide reads, in one-letter code: Large ribosomal subunit protein uL29 (123 aa).

It belongs to the universal ribosomal protein uL29 family. Component of the large ribosomal subunit.

It is found in the cytoplasm. Component of the large ribosomal subunit. The ribosome is a large ribonucleoprotein complex responsible for the synthesis of proteins in the cell. Plays an essential role in early embryonic development. May act as a haploinsufficient tumor suppressor. The chain is Large ribosomal subunit protein uL29 (rpl35) from Danio rerio (Zebrafish).